Reading from the N-terminus, the 233-residue chain is Coenzyme Q-binding protein COQ10 homolog, mitochondrial (233 aa).

Residues 1–34 (MAEKATSLFLRAMEISEKQSFDVMRRNSSCTIRH) constitute a mitochondrion transit peptide.

The protein belongs to the COQ10 family. As to quaternary structure, interacts with coenzyme Q.

It localises to the mitochondrion inner membrane. Required for the function of coenzyme Q in the respiratory chain. May serve as a chaperone or may be involved in the transport of Q6 from its site of synthesis to the catalytic sites of the respiratory complexes. This chain is Coenzyme Q-binding protein COQ10 homolog, mitochondrial, found in Danio rerio (Zebrafish).